The following is a 320-amino-acid chain: Adhesin MafA 3 (320 aa).

The signal sequence occupies residues 1–18 (MQARLLIPILFSVFILSA). Residue C19 is the site of N-palmitoyl cysteine attachment. C19 carries S-diacylglycerol cysteine lipidation. Over residues 288–298 (HTGNSAPSVET) the composition is skewed to polar residues. The tract at residues 288-320 (HTGNSAPSVETDNSHEGYGYSDEVVRQHRQGQP) is disordered.

This sequence belongs to the MafA family.

The protein localises to the cell outer membrane. The sequence is that of Adhesin MafA 3 (mafA3) from Neisseria meningitidis serogroup C / serotype 2a (strain ATCC 700532 / DSM 15464 / FAM18).